The chain runs to 618 residues: MPIQVLPPQLANQIAAGEVVERPASVVKELVENSLDAGATRVDIDIERGGAKLIRIRDNGCGIKKEELALALARHATSKIASLDDLEAIISLGFRGEALASISSVSRLTLTSRTAEQAEAWQAYAEGRDMDVTVKPAAHPVGTTLEVLDLFYNTPARRKFMRTEKTEFNHIDEIIRRIALARFDVTLNLSHNGKLVRQYRAVAKDGQKERRLGAICGTPFLEQALAIEWQHGDLTLRGWVADPNHTTTALTEIQYCYVNGRMMRDRLINHAIRQACEDKLGADQQPAFVLYLEIDPHQVDVNVHPAKHEVRFHQSRLVHDFIYQGVLSVLQQQTETTLPLEDIAPAPRHVPENRIAAGRNHFAVPAEPTAAREPATPRYSGGASGGNGGRQSAGGWPHAQPGYQKQQGEVYRTLLQTPATSPAPEPVAPALDGHSQSFGRVLTIVGGDCALLEHAGTIQLLSLPVAERWLRQAQLTPGQSPVCAQPLLIPLRLKVSADEKVALQKAQSLLGELGIEFQSDAQHVTIRAVPLPLRQQNLQILIPELIGYLAQQTTFATVNIAQWIARNVQSEHPQWSMAQAISLLADVERLCPQLVKAPPGGLLQPVDLHSAMNALKHE.

A compositionally biased stretch (low complexity) spans 366-381; it reads AEPTAAREPATPRYSG. The disordered stretch occupies residues 366 to 403; it reads AEPTAAREPATPRYSGGASGGNGGRQSAGGWPHAQPGY. Positions 382–392 are enriched in gly residues; the sequence is GASGGNGGRQS.

The protein belongs to the DNA mismatch repair MutL/HexB family.

This protein is involved in the repair of mismatches in DNA. It is required for dam-dependent methyl-directed DNA mismatch repair. May act as a 'molecular matchmaker', a protein that promotes the formation of a stable complex between two or more DNA-binding proteins in an ATP-dependent manner without itself being part of a final effector complex. The polypeptide is DNA mismatch repair protein MutL (Salmonella schwarzengrund (strain CVM19633)).